The following is a 651-amino-acid chain: MSAASLYPVRPEVAATTLTDEATYKAMYQQSVVNPDGFWREQAQRLDWIKPFSVVKQTSFDDHRVDIKWFADGTLNVAYNCLDRHLAERGDTIAIIWEGDDPSEHREITYRELHEEVCKFANALRGQDVHRGDVVTIYMPMIPEAVVAMLACARIGAIHSVVFGGFSPEALAGRIIDCSSKVVITADEGLRGGKKTALKANVDRALTNPETSSVQKVIVCKRTGGEIEWNRHRDIWYHALLEVASSTCAPKEMGAEESLFILYTSGSTGKPKGVLHTTAGYLLYAALTHERVFDYKPGEIYWCTADVGWVTGHSYIVYGPLANGATTLLFEGVPNYPDITRVSKIIDKHKVNILYTAPTAIRAMMAEGTKSVEGADGSSLRLLGSVGEPINPEAWGWYYNTVGKQNCPIVDTWWQTETGGILISPLPGATALKPGSATRPFFGVIPALVDNLGNLIEGAAEGNLVILDSWPGQSRTLYGDHDRFVDTYFKTFRGMYFTGDGARRDEDGYYWITGRVDDVLNVSGHRMGTAEIESAMVAHPKVAEAAVVGVPHDLKGQGIYVYVTLNAGEEPSDALRTELRNWVRKEIGPIASPDFIQWAPGLPKTRSGKIMRRILRKIATAEYDALGDISTLADPGVVQHLIETHKSMSAA.

CoA is bound by residues 191-194 (RGGK), Thr311, and Asn335. ATP contacts are provided by residues 387–389 (GEP), 411–416 (DTWWQT), Asp500, and Arg515. CoA is bound at residue Ser523. Arg526 provides a ligand contact to ATP. Residues Val537, His539, and Val542 each contribute to the Mg(2+) site. A CoA-binding site is contributed by Arg584. Lys609 is subject to N6-acetyllysine.

This sequence belongs to the ATP-dependent AMP-binding enzyme family. Mg(2+) is required as a cofactor. Acetylated. Deacetylation by the SIR2-homolog deacetylase activates the enzyme.

It carries out the reaction acetate + ATP + CoA = acetyl-CoA + AMP + diphosphate. Its function is as follows. Catalyzes the conversion of acetate into acetyl-CoA (AcCoA), an essential intermediate at the junction of anabolic and catabolic pathways. AcsA undergoes a two-step reaction. In the first half reaction, AcsA combines acetate with ATP to form acetyl-adenylate (AcAMP) intermediate. In the second half reaction, it can then transfer the acetyl group from AcAMP to the sulfhydryl group of CoA, forming the product AcCoA. The protein is Acetyl-coenzyme A synthetase of Pseudomonas syringae pv. tomato (strain ATCC BAA-871 / DC3000).